A 256-amino-acid chain; its full sequence is Putative adhesin P1-like protein MPN_132 (256 aa).

Positions 56–72 (AVSESQAATSSTTTTAT) are enriched in low complexity. Disordered regions lie at residues 56 to 115 (AVSE…PYLH) and 149 to 235 (FGTD…EVVG). A compositionally biased stretch (polar residues) spans 96–112 (KASTQGSGQTNSQNTSP). Composition is skewed to low complexity over residues 155-179 (TQPQ…LGSV) and 211-222 (STSDGNTSSTNN).

It belongs to the adhesin P1 family.

The chain is Putative adhesin P1-like protein MPN_132 from Mycoplasma pneumoniae (strain ATCC 29342 / M129 / Subtype 1) (Mycoplasmoides pneumoniae).